Here is a 238-residue protein sequence, read N- to C-terminus: DNA repair protein RAD59 (238 aa).

It belongs to the RAD52 family. Interacts with RAD51 and RAD52.

The protein resides in the nucleus. Functionally, involved in the repair of double-strand breaks in DNA during vegetative growth via recombination and single-strand annealing. Anneals complementary single-stranded DNA. This Saccharomyces cerevisiae (strain ATCC 204508 / S288c) (Baker's yeast) protein is DNA repair protein RAD59 (RAD59).